Consider the following 253-residue polypeptide: MALQSESTGPVSPSVDPAEIAKFSRLSAEWWDPTGKMAPLHRINPLRISFIRDAACRKFERNAKSLSCLSGLRMLDIGCGAGLLCEPFTRLGAQVIGIDPSATNIAAAKLHADKSHLAIDYRCTTVEEIDPRERFDIVMAMEVIEHVNDVPAFLGRCAALMKPTGIMLVATLNRNWKSFALAIVGAEYVMRWLPRGTHQWDKFVTPDELEQHLQGLGLVVTEQSGLVFNPLADRWRLSPDMDVNYMVVAETAP.

Residues arginine 47, glycine 78, aspartate 99, and methionine 141 each coordinate S-adenosyl-L-methionine.

Belongs to the methyltransferase superfamily. UbiG/COQ3 family.

The enzyme catalyses a 3-demethylubiquinol + S-adenosyl-L-methionine = a ubiquinol + S-adenosyl-L-homocysteine + H(+). The catalysed reaction is a 3-(all-trans-polyprenyl)benzene-1,2-diol + S-adenosyl-L-methionine = a 2-methoxy-6-(all-trans-polyprenyl)phenol + S-adenosyl-L-homocysteine + H(+). It participates in cofactor biosynthesis; ubiquinone biosynthesis. Functionally, O-methyltransferase that catalyzes the 2 O-methylation steps in the ubiquinone biosynthetic pathway. This Rhodopseudomonas palustris (strain BisB5) protein is Ubiquinone biosynthesis O-methyltransferase.